Reading from the N-terminus, the 147-residue chain is UPF0251 protein NT01CX_1491 (147 aa).

This sequence belongs to the UPF0251 family.

The polypeptide is UPF0251 protein NT01CX_1491 (Clostridium novyi (strain NT)).